Reading from the N-terminus, the 433-residue chain is C2H2 type master regulator of conidiophore development brlA (433 aa).

2 disordered regions span residues proline 23–serine 54 and threonine 238–glycine 268. Low complexity predominate over residues threonine 30–serine 48. Positions threonine 238 to serine 264 are enriched in polar residues. 2 C2H2-type zinc fingers span residues phenylalanine 321–histidine 345 and histidine 351–histidine 376. Residues glutamate 391–cysteine 423 form a disordered region.

The protein localises to the nucleus. Functionally, brlA, abaA and wetA are pivotal regulators of conidiophore development and conidium maturation. They act individually and together to regulate their own expression and that of numerous other sporulation-specific genes. Binds promoters of target genes at brlA response elements (BREs) containing the conserved sequence 5'-(C/A)(A/G)AGGG(G/A)-3'. The polypeptide is C2H2 type master regulator of conidiophore development brlA (Penicillium camemberti (strain FM 013)).